The primary structure comprises 969 residues: MADRLIVKGAREHNLRSVDLDLPRDSLIVFTGLSGSGKSSLAFDTIFAEGQRRYVESLSAYARQFLGQMDKPDVDFIEGLSPAVSIDQKSTNRNPRSTVGTITEVYDYLRLLYARAGTPHCPICGEQISRQTPQQIVDQVLVLPEGTRFLVLAPVVRTRKGEFADLFDKLNAQGYSRVRVDDVVYPLSDPPKLKKQEKHDIEVVVDRLTVKIAAKQRLTDSVETALNLADGIVVLEFPDDHDERGHPREQCFSEKLACPNGHPLAVDDLEPRSFSFNSPYGACPECVGLGIRKEIDSDLVVPDPDRTLAEGAVAPWSAGRTAEYFTRMMAGLGEKLGFDVDTPWRKLPAKARKAILEGSDHQVHVQYHNRYGRPRSYYVDFEGVLTFLQRKMEQTESEQMKERYEGFMRNIPCPVCQGTRLKPEILAVTLAAGERGAKSIAEVCELSIADCSAFLNALILGVREQAIAGQVLKEIQSRLGFLLDVGLEYLSLSRAAATLSGGEAQRIRLATQIGSGLVGVLYVLDEPSIGLHQRDNRRLIETLTRLRALGNTLIVVEHDEDTIAHADWVVDIGPGAGEHGGQIVHNGTYRELLANKDSITGAYLSGRESIATPTRRRSVDRKRELTVVGAREHNLRGIDVSFPLGVLTSVTGVSGSGKSTLVNDILAAVLANRLNGARQVPGRHTRVTGLEHLDKLVRVDQSPIGRTPRSNPATYTGVFDKIRILFAATTEAKVRGYQPGRFSFNVKGGRCEACTGDGTIKIEMNFLPDVYVPCEVCQGARYNRETLEVHYKGKAISEVLDMSIEEAAEFFEPIIGINRYLRTLVDVGLGYVRLGQPAPTLSGGEAQRVKLASELQKRSTGRTIYILDEPTTGLHFDDIRKLLNVINGLVDKDNTVIVIEHNLDVIKTSDWIVDMGPEGGAQGGTVVAEGTPEDVAAVPESYTGKFLAEVVGAGCAPARTPRRRRTVTA.

32-39 (GLSGSGKS) lines the ATP pocket. The C4-type zinc-finger motif lies at 258-286 (CPNGHPLAVDDLEPRSFSFNSPYGACPEC). 2 ABC transporter domains span residues 316–599 (WSAG…KDSI) and 619–948 (VDRK…KFLA). 652-659 (GVSGSGKS) provides a ligand contact to ATP. The C4-type zinc-finger motif lies at 751-777 (CEACTGDGTIKIEMNFLPDVYVPCEVC).

This sequence belongs to the ABC transporter superfamily. UvrA family. As to quaternary structure, forms a heterotetramer with UvrB during the search for lesions.

The protein localises to the cytoplasm. The UvrABC repair system catalyzes the recognition and processing of DNA lesions. UvrA is an ATPase and a DNA-binding protein. A damage recognition complex composed of 2 UvrA and 2 UvrB subunits scans DNA for abnormalities. When the presence of a lesion has been verified by UvrB, the UvrA molecules dissociate. The sequence is that of UvrABC system protein A from Mycobacterium leprae (strain TN).